A 172-amino-acid polypeptide reads, in one-letter code: Light-harvesting complex-like protein OHP2, chloroplastic (172 aa).

The N-terminal 43 residues, 1–43, are a transit peptide targeting the chloroplast; sequence MSVASPIQCIRILNPSSSSSSSTASSSFRFSTTTKPCVFIIRC. Topologically, residues 44 to 135 are stromal; the sequence is SQTEGPLRRP…QPKNEISNGR (92 aa). Residues 45–90 are disordered; it reads QTEGPLRRPSAPPTLREPQKPVPPSQPSSSPPPSPPPQKAVAVDGK. Residues 64–82 are compositionally biased toward pro residues; the sequence is KPVPPSQPSSSPPPSPPPQ. The chain crosses the membrane as a helical span at residues 136-156; sequence WAMFGFAVGMLTEYATGSDLV. The Lumenal portion of the chain corresponds to 157-172; that stretch reads DQVKILLSNFGILDLE.

The protein belongs to the ELIP/psbS family. As to quaternary structure, component of a high molecular weight complex containing OHP1, OHP2 and HCF244, and PSII core proteins D1/D2, HCF136 and HCF173. Forms a trimeric complex with OHP1 and HCF244 that mutually stabilizes each subunit.

It is found in the plastid. The protein localises to the chloroplast thylakoid membrane. In terms of biological role, may play a photoprotective role within PSI in response to light stress. Forms a trimeric complex with OHP1 and HCF244 that is required to promote PSII core subunit assembly. The trimeric complex forms a transient PSII reaction center-like complex with PsbA, PsbD, PsbE, PsbF and PsbI subunits in thylakoids for early assembly of PSII as well as PSII repair. The trimeric complex is required for the recruitment of ribosomes to the psbA mRNA during PSII biogenesis and repair. Forms a heterodimer with OHP1 that binds chlorophylls and carotenoids, and that may function in the delivery of pigments to the PsbA subunit of PSII. In Arabidopsis thaliana (Mouse-ear cress), this protein is Light-harvesting complex-like protein OHP2, chloroplastic.